Reading from the N-terminus, the 293-residue chain is Cyclohexadienyl dehydrogenase (293 aa).

The Prephenate/arogenate dehydrogenase domain maps to 5–293; it reads KHIAIIGLGL…ALKTDHDIRP (289 aa). NAD(+) is bound at residue 6 to 30; sequence HIAIIGLGLIGSSAARATKAYCPDV.

The protein belongs to the prephenate/arogenate dehydrogenase family. In terms of assembly, homodimer.

The catalysed reaction is L-arogenate + NAD(+) = L-tyrosine + CO2 + NADH. It carries out the reaction prephenate + NAD(+) = 3-(4-hydroxyphenyl)pyruvate + CO2 + NADH. It participates in amino-acid biosynthesis; L-tyrosine biosynthesis; (4-hydroxyphenyl)pyruvate from prephenate (NAD(+) route): step 1/1. It functions in the pathway amino-acid biosynthesis; L-tyrosine biosynthesis; L-tyrosine from L-arogenate (NAD(+) route): step 1/1. Insensitive to feedback inhibition by L-tyrosine. Its function is as follows. Can function as either prephenate dehydrogenase or as arogenate dehydrogenase in the biosynthesis of L-tyrosine. Catalyzes two analogous reactions: converts prephenate to 4-hydroxyphenylpyruvate and transforms L-arogenate to L-tyrosine. Is not able to utilize NADP(+) instead of NAD(+) as cosubstrate. This chain is Cyclohexadienyl dehydrogenase, found in Zymomonas mobilis subsp. mobilis (strain ATCC 31821 / ZM4 / CP4).